The primary structure comprises 301 residues: Vomeronasal type-1 receptor 4 (301 aa).

The Extracellular segment spans residues 1-15 (MASRYVAVGMMLSQT). Residues 16–36 (VVGVLGSFSLLLHYLSLHYIG) traverse the membrane as a helical segment. Topologically, residues 37 to 48 (CRLRSADLIVKH) are cytoplasmic. A helical membrane pass occupies residues 49-69 (LIAASFLTLLCKGVPQTMAAF). Over 70–88 (RVRYFLNAIGCKLVFYLHR) the chain is Extracellular. Residues 89 to 107 (VGRGVSTGTTCLLSVFQVI) form a helical membrane-spanning segment. Topologically, residues 108–126 (TVSSRKSRWAKLKEKAPKH) are cytoplasmic. Residues 127–147 (VGFSVLLCWILCMLVNIIFPI) form a helical membrane-spanning segment. The Extracellular segment spans residues 148 to 185 (YVTGKRNHTNITVNKDLGDCCGRGNNKIAQTLRAMLLS). N-linked (GlcNAc...) asparagine glycosylation is found at asparagine 154 and asparagine 157. A helical membrane pass occupies residues 186 to 206 (FPDVLCLGFMLWASSSMVCIL). The Cytoplasmic portion of the chain corresponds to 207–234 (HRHKQRVQHIHRSNLSPRASPENRATQS). Residues 235-255 (ILIPVSTFVSSYTLSCLLQVC) traverse the membrane as a helical segment. Residues 256–264 (MALLDNPNS) are Extracellular-facing. Residues 265–285 (LLVNTSALMSACFPTLSPFVL) form a helical membrane-spanning segment. Residues 286–301 (MSCDPSVYRLCFAWKR) are Cytoplasmic-facing.

This sequence belongs to the G-protein coupled receptor 1 family.

It localises to the cell membrane. In terms of biological role, putative pheromone receptor. This is Vomeronasal type-1 receptor 4 (VN1R4) from Pongo pygmaeus (Bornean orangutan).